We begin with the raw amino-acid sequence, 397 residues long: MTERVVLAYSGGLDTSVAIGWIAEETGAEVIAVAVDVGQGGEDLDVIRKRALACGAVEAEVADAKDEFAEEYCLPAIKANARYMDRYPLVSALSRPAIVKHLVAAAKKHDASIVAHGCTGKGNDQVRFEAGIQALGPDLKCIAPVRDYAMTRDKAIAFCEAKQLPIATTKKSPYSIDQNVFGRAIETGFLEDIWNAPIEDIFEYTSNPAEPREADEVVISFASGVPVAIDGRPVTVLQAIQQLNERAGAQGIGRIDMVEDRLVGIKSREVYEAPGAIALITAHQELENVTVERELARFKRQVEQRWGELVYDGLWFSPLKRALDGFIEEANQQVTGDIRMTLHAGTAVVTGRRSERSLYDFDLATYDTGDTFDQSKAQGFIDIFALSAKIAAKRDLV.

8–16 (AYSGGLDTS) serves as a coordination point for ATP. Y87 is an L-citrulline binding site. An ATP-binding site is contributed by G117. 3 residues coordinate L-aspartate: T119, N123, and D124. N123 contacts L-citrulline. L-citrulline is bound by residues R127, S175, E259, and Y271.

This sequence belongs to the argininosuccinate synthase family. Type 1 subfamily. As to quaternary structure, homotetramer.

It localises to the cytoplasm. The enzyme catalyses L-citrulline + L-aspartate + ATP = 2-(N(omega)-L-arginino)succinate + AMP + diphosphate + H(+). Its pathway is amino-acid biosynthesis; L-arginine biosynthesis; L-arginine from L-ornithine and carbamoyl phosphate: step 2/3. The protein is Argininosuccinate synthase of Streptomyces clavuligerus.